The primary structure comprises 429 residues: Phenylalanine--tRNA ligase, chloroplastic/mitochondrial (429 aa).

A chloroplast and mitochondrion-targeting transit peptide spans 1-53 (MTVFSVQSTIFSRASVALLSSNGFKRFSFVSSFSSSAAYSPPKMRKRRYPIVS). N-acetylalanine is present on Ala-54. Residues 163 to 166 (SAHQ), Arg-185, 192 to 194 (THY), 199 to 201 (QME), Glu-269, and Phe-294 each bind substrate. Positions 338–429 (SKYPPCYKDI…VQKKLNVELR (92 aa)) constitute an FDX-ACB domain.

The protein belongs to the class-II aminoacyl-tRNA synthetase family. In terms of assembly, monomer.

The protein resides in the plastid. Its subcellular location is the chloroplast stroma. The protein localises to the mitochondrion matrix. It carries out the reaction tRNA(Phe) + L-phenylalanine + ATP = L-phenylalanyl-tRNA(Phe) + AMP + diphosphate + H(+). In terms of biological role, is responsible for the charging of tRNA(Phe) with phenylalanine in mitochondrial translation. This is Phenylalanine--tRNA ligase, chloroplastic/mitochondrial from Arabidopsis thaliana (Mouse-ear cress).